Here is a 571-residue protein sequence, read N- to C-terminus: Isocitrate dehydrogenase kinase/phosphatase (571 aa).

Residues 318–324 and Lys-339 each bind ATP; that span reads APGVRGM. Residue Asp-374 is part of the active site.

It belongs to the AceK family.

The protein localises to the cytoplasm. The enzyme catalyses L-seryl-[isocitrate dehydrogenase] + ATP = O-phospho-L-seryl-[isocitrate dehydrogenase] + ADP + H(+). In terms of biological role, bifunctional enzyme which can phosphorylate or dephosphorylate isocitrate dehydrogenase (IDH) on a specific serine residue. This is a regulatory mechanism which enables bacteria to bypass the Krebs cycle via the glyoxylate shunt in response to the source of carbon. When bacteria are grown on glucose, IDH is fully active and unphosphorylated, but when grown on acetate or ethanol, the activity of IDH declines drastically concomitant with its phosphorylation. This is Isocitrate dehydrogenase kinase/phosphatase from Pseudomonas entomophila (strain L48).